Here is a 178-residue protein sequence, read N- to C-terminus: MNATPAPADDLIVIGKIYSVHGVRGEVKVFSFTDPIKNLLDYKTWTLKREGSVKQVELVSGRGNDKFLVAKLKGLDDREEARLLAGYEICVPRSLFPELTDGEYYWYQLQGLKVIDGLGQLLGKIDHLLETGSNDVMVVKPCAGSLDDRERLLPYTEQCVLAVDLAAGEMKVEWDADF.

A PRC barrel domain is found at 101-178 (DGEYYWYQLQ…EMKVEWDADF (78 aa)).

This sequence belongs to the RimM family. As to quaternary structure, binds ribosomal protein uS19.

It is found in the cytoplasm. An accessory protein needed during the final step in the assembly of 30S ribosomal subunit, possibly for assembly of the head region. Essential for efficient processing of 16S rRNA. May be needed both before and after RbfA during the maturation of 16S rRNA. It has affinity for free ribosomal 30S subunits but not for 70S ribosomes. This Pseudomonas fluorescens (strain ATCC BAA-477 / NRRL B-23932 / Pf-5) protein is Ribosome maturation factor RimM.